The chain runs to 258 residues: UPF0246 protein Shew_1093 (258 aa).

It belongs to the UPF0246 family.

The polypeptide is UPF0246 protein Shew_1093 (Shewanella loihica (strain ATCC BAA-1088 / PV-4)).